Reading from the N-terminus, the 576-residue chain is Proline--tRNA ligase (576 aa).

This sequence belongs to the class-II aminoacyl-tRNA synthetase family. ProS type 1 subfamily. In terms of assembly, homodimer.

The protein localises to the cytoplasm. It catalyses the reaction tRNA(Pro) + L-proline + ATP = L-prolyl-tRNA(Pro) + AMP + diphosphate. In terms of biological role, catalyzes the attachment of proline to tRNA(Pro) in a two-step reaction: proline is first activated by ATP to form Pro-AMP and then transferred to the acceptor end of tRNA(Pro). As ProRS can inadvertently accommodate and process non-cognate amino acids such as alanine and cysteine, to avoid such errors it has two additional distinct editing activities against alanine. One activity is designated as 'pretransfer' editing and involves the tRNA(Pro)-independent hydrolysis of activated Ala-AMP. The other activity is designated 'posttransfer' editing and involves deacylation of mischarged Ala-tRNA(Pro). The misacylated Cys-tRNA(Pro) is not edited by ProRS. The protein is Proline--tRNA ligase of Trichlorobacter lovleyi (strain ATCC BAA-1151 / DSM 17278 / SZ) (Geobacter lovleyi).